Here is a 346-residue protein sequence, read N- to C-terminus: DNA-directed RNA polymerases I and III subunit RPAC1 (346 aa).

Ala-2 carries the post-translational modification N-acetylalanine.

This sequence belongs to the archaeal Rpo3/eukaryotic RPB3 RNA polymerase subunit family. As to quaternary structure, component of the RNA polymerase I and RNA polymerase III complexes consisting of at least 13 and 17 subunits, respectively. Pol I complex consists of a ten-subunit catalytic core composed of POLR1A/RPA1, POLR1B/RPA2, POLR1C/RPAC1, POLR1D/RPAC2, POLR1H/RPA12, POLR2E/RPABC1, POLR2F/RPABC2, POLR2H/RPABC3, POLR2K/RPABC4 and POLR2L/RPABC5; a mobile stalk subunit POLR1F/RPA43 protruding from the core and additional subunits homologous to general transcription factors POLR1E/RPA49 and POLR1G/RPA34. Part of Pol I pre-initiation complex (PIC), in which Pol I core assembles with RRN3 and promoter-bound UTBF and SL1/TIF-IB complex. Pol III complex consists of a ten-subunit catalytic core composed of POLR3A/RPC1, POLR3B/RPC2, POLR1C/RPAC1, POLR1D/RPAC2, POLR3K/RPC10, POLR2E/RPABC1, POLR2F/RPABC2, POLR2H/RPABC3, POLR2K/RPABC4 and POLR2L/RPABC5; a mobile stalk composed of two subunits POLR3H/RPC8 and CRCP/RPC9, protruding from the core and functioning primarily in transcription initiation; and additional subunits homologous to general transcription factors of the RNA polymerase II machinery, POLR3C/RPC3-POLR3F/RPC6-POLR3G/RPC7 heterotrimer required for transcription initiation and POLR3D/RPC4-POLR3E/RPC5 heterodimer involved in both transcription initiation and termination.

It is found in the nucleus. The protein resides in the cytoplasm. The protein localises to the cytosol. Its function is as follows. DNA-dependent RNA polymerase catalyzes the transcription of DNA into RNA using the four ribonucleoside triphosphates as substrates. Common component of RNA polymerases I and III which synthesize ribosomal RNA precursors and short non-coding RNAs including 5S rRNA, snRNAs, tRNAs and miRNAs, respectively. POLR1C/RPAC1 is part of the polymerase core and may function as a clamp element that moves to open and close the cleft. This chain is DNA-directed RNA polymerases I and III subunit RPAC1 (POLR1C), found in Bos taurus (Bovine).